A 249-amino-acid chain; its full sequence is General transcription factor IIF subunit 2 (249 aa).

An N-acetylalanine modification is found at Ala-2. Residues Lys-22, Lys-33, and Lys-137 each carry the N6-acetyllysine modification. Position 142 is a phosphoserine (Ser-142). Gly-227 and His-229 together coordinate DNA. The residue at position 248 (Ser-248) is a Phosphoserine.

It belongs to the TFIIF beta subunit family. As to quaternary structure, heterodimer of an alpha and a beta subunit. Interacts with HTATSF1 and GPBP1. Interacts with URI1. Interacts with GTF2B (via N-terminus); this interaction is inhibited in presence of GTF2F1. Part of TBP-based Pol II pre-initiation complex (PIC), in which Pol II core assembles with general transcription factors and other specific initiation factors including GTF2E1, GTF2E2, GTF2F1, GTF2F2, TCEA1, ERCC2, ERCC3, GTF2H2, GTF2H3, GTF2H4, GTF2H5, GTF2A1, GTF2A2, GTF2B and TBP; this large multi-subunit PIC complex mediates DNA unwinding and targets Pol II core to the transcription start site where the first phosphodiester bond forms.

The protein resides in the nucleus. Functionally, TFIIF is a general transcription initiation factor that binds to RNA polymerase II and helps to recruit it to the initiation complex in collaboration with TFIIB. In Homo sapiens (Human), this protein is General transcription factor IIF subunit 2 (GTF2F2).